The sequence spans 68 residues: MRCVPVFIILLLLASPAAPKSLETRIQNDLIRAGLTDADLKTEKGFLSGLLNVAGSVCCKVDTSCCSN.

An N-terminal signal peptide occupies residues 1–19; that stretch reads MRCVPVFIILLLLASPAAP. Positions 20–54 are excised as a propeptide; sequence KSLETRIQNDLIRAGLTDADLKTEKGFLSGLLNVA.

Belongs to the conotoxin T superfamily. Contains 2 disulfide bonds that can be either 'C1-C3, C2-C4' or 'C1-C4, C2-C3', since these disulfide connectivities have been observed for conotoxins with cysteine framework V (for examples, see AC P0DQQ7 and AC P81755). Expressed by the venom duct.

It localises to the secreted. The polypeptide is Conotoxin Lp5.2 (Conus leopardus (Leopard cone)).